Here is a 382-residue protein sequence, read N- to C-terminus: Queuine tRNA-ribosyltransferase (382 aa).

Aspartate 93 serves as the catalytic Proton acceptor. Residues 93–97 (DSGGF), aspartate 147, glutamine 191, and glycine 218 each bind substrate. An RNA binding region spans residues 249–255 (GVGKPED). Aspartate 268 (nucleophile) is an active-site residue. The tract at residues 273–277 (TRNAR) is RNA binding; important for wobble base 34 recognition. Zn(2+) contacts are provided by cysteine 306, cysteine 308, cysteine 311, and histidine 337.

Belongs to the queuine tRNA-ribosyltransferase family. In terms of assembly, homodimer. Within each dimer, one monomer is responsible for RNA recognition and catalysis, while the other monomer binds to the replacement base PreQ1. Requires Zn(2+) as cofactor.

The catalysed reaction is 7-aminomethyl-7-carbaguanine + guanosine(34) in tRNA = 7-aminomethyl-7-carbaguanosine(34) in tRNA + guanine. Its pathway is tRNA modification; tRNA-queuosine biosynthesis. Functionally, catalyzes the base-exchange of a guanine (G) residue with the queuine precursor 7-aminomethyl-7-deazaguanine (PreQ1) at position 34 (anticodon wobble position) in tRNAs with GU(N) anticodons (tRNA-Asp, -Asn, -His and -Tyr). Catalysis occurs through a double-displacement mechanism. The nucleophile active site attacks the C1' of nucleotide 34 to detach the guanine base from the RNA, forming a covalent enzyme-RNA intermediate. The proton acceptor active site deprotonates the incoming PreQ1, allowing a nucleophilic attack on the C1' of the ribose to form the product. After dissociation, two additional enzymatic reactions on the tRNA convert PreQ1 to queuine (Q), resulting in the hypermodified nucleoside queuosine (7-(((4,5-cis-dihydroxy-2-cyclopenten-1-yl)amino)methyl)-7-deazaguanosine). The chain is Queuine tRNA-ribosyltransferase from Haemophilus influenzae (strain PittEE).